The following is a 498-amino-acid chain: MEFSTQSTASLHQIKTAALAVGVYADGELSPAADVIDRASNNAVRQVVKAEFRGRPGATLVLRALPGVSAQRVVLVGLGKQSEYNARAHAAAEQGFAAACVAARITEAVSTLAANSIADTPIRARARSAAIAAGAATYHYDATFGKPDRDARPKLKKIVQVVERGEAAQTQQGLREGSAIAHGMELTRTLGNLPGNVCTPTYLGDTARKLAREFKSLKVEVLDRKQVEALGMGSFLSVARGSDEPLRFIVLRHAGKPAKKSKAGPVVLVGKGITFDAGGISLKPAATMDEMKYDMCGAASVLGTFRALAELELPLDVVGLIAACENLPSGKANKPGDIVTSMSGQTIEILNTDAEGRLVLCDALTYAERFKPSAVVDIATLTGACVVALGHVNTGLFTQDDALADALLAAGRQSLDTAWRMPMDDAYQDQLKSNFADVANIGGPPAGSVTAACFLSRFAKAYRWAHLDIAGTAWRSGKDKGATGRPVPLLMQFLLDQA.

Residues Lys-271 and Asp-276 each contribute to the Mn(2+) site. The active site involves Lys-283. Residues Asp-294, Asp-353, and Glu-355 each coordinate Mn(2+). Residue Arg-357 is part of the active site.

Belongs to the peptidase M17 family. The cofactor is Mn(2+).

The protein resides in the cytoplasm. It carries out the reaction Release of an N-terminal amino acid, Xaa-|-Yaa-, in which Xaa is preferably Leu, but may be other amino acids including Pro although not Arg or Lys, and Yaa may be Pro. Amino acid amides and methyl esters are also readily hydrolyzed, but rates on arylamides are exceedingly low.. It catalyses the reaction Release of an N-terminal amino acid, preferentially leucine, but not glutamic or aspartic acids.. Its function is as follows. Presumably involved in the processing and regular turnover of intracellular proteins. Catalyzes the removal of unsubstituted N-terminal amino acids from various peptides. This Bordetella petrii (strain ATCC BAA-461 / DSM 12804 / CCUG 43448) protein is Probable cytosol aminopeptidase.